Reading from the N-terminus, the 214-residue chain is uncharacterized protein (214 aa).

Helical transmembrane passes span 19 to 39 and 50 to 70; these read IAIF…SYIL and LALF…LLIG.

The protein resides in the cell membrane. This is an uncharacterized protein from Methanocaldococcus jannaschii (strain ATCC 43067 / DSM 2661 / JAL-1 / JCM 10045 / NBRC 100440) (Methanococcus jannaschii).